We begin with the raw amino-acid sequence, 250 residues long: Ribosomal RNA small subunit methyltransferase J (250 aa).

S-adenosyl-L-methionine contacts are provided by residues 102–103 (RD), 118–119 (ER), 154–155 (SS), and Asp-172.

It belongs to the methyltransferase superfamily. RsmJ family.

The protein localises to the cytoplasm. It carries out the reaction guanosine(1516) in 16S rRNA + S-adenosyl-L-methionine = N(2)-methylguanosine(1516) in 16S rRNA + S-adenosyl-L-homocysteine + H(+). Specifically methylates the guanosine in position 1516 of 16S rRNA. The chain is Ribosomal RNA small subunit methyltransferase J from Edwardsiella ictaluri (strain 93-146).